We begin with the raw amino-acid sequence, 287 residues long: Bifunctional protein FolD (287 aa).

NADP(+)-binding positions include 171 to 173 (GHS) and I237.

This sequence belongs to the tetrahydrofolate dehydrogenase/cyclohydrolase family. As to quaternary structure, homodimer.

It carries out the reaction (6R)-5,10-methylene-5,6,7,8-tetrahydrofolate + NADP(+) = (6R)-5,10-methenyltetrahydrofolate + NADPH. The enzyme catalyses (6R)-5,10-methenyltetrahydrofolate + H2O = (6R)-10-formyltetrahydrofolate + H(+). It functions in the pathway one-carbon metabolism; tetrahydrofolate interconversion. Its function is as follows. Catalyzes the oxidation of 5,10-methylenetetrahydrofolate to 5,10-methenyltetrahydrofolate and then the hydrolysis of 5,10-methenyltetrahydrofolate to 10-formyltetrahydrofolate. This chain is Bifunctional protein FolD, found in Methanosarcina barkeri (strain Fusaro / DSM 804).